A 415-amino-acid polypeptide reads, in one-letter code: Tyrosine--tRNA ligase (415 aa).

Y34 is a binding site for L-tyrosine. Positions 39 to 48 (PSAKSIHLGN) match the 'HIGH' region motif. Y163 and Q167 together coordinate L-tyrosine. Positions 225-229 (KFGKS) match the 'KMSKS' region motif. K228 is a binding site for ATP. Residues 349–414 (EKIIDILDRA…GKKKIFIIKK (66 aa)) form the S4 RNA-binding domain.

The protein belongs to the class-I aminoacyl-tRNA synthetase family. TyrS type 1 subfamily. Homodimer.

It localises to the cytoplasm. It catalyses the reaction tRNA(Tyr) + L-tyrosine + ATP = L-tyrosyl-tRNA(Tyr) + AMP + diphosphate + H(+). In terms of biological role, catalyzes the attachment of tyrosine to tRNA(Tyr) in a two-step reaction: tyrosine is first activated by ATP to form Tyr-AMP and then transferred to the acceptor end of tRNA(Tyr). The protein is Tyrosine--tRNA ligase of Mycoplasma mobile (strain ATCC 43663 / 163K / NCTC 11711) (Mesomycoplasma mobile).